We begin with the raw amino-acid sequence, 390 residues long: UPF0229 protein OB2647 (390 aa).

The segment at 99–121 is disordered; the sequence is NASQQGQQGQGNGKKAGDQPGTD.

The protein belongs to the UPF0229 family.

This is UPF0229 protein OB2647 from Oceanobacillus iheyensis (strain DSM 14371 / CIP 107618 / JCM 11309 / KCTC 3954 / HTE831).